Here is a 377-residue protein sequence, read N- to C-terminus: Nitric oxide reductase FlRd-NAD(+) reductase (377 aa).

The protein belongs to the FAD-dependent oxidoreductase family. The cofactor is FAD.

The protein localises to the cytoplasm. The enzyme catalyses 2 reduced [nitric oxide reductase rubredoxin domain] + NAD(+) + H(+) = 2 oxidized [nitric oxide reductase rubredoxin domain] + NADH. The protein operates within nitrogen metabolism; nitric oxide reduction. Functionally, one of at least two accessory proteins for anaerobic nitric oxide (NO) reductase. Reduces the rubredoxin moiety of NO reductase. In Escherichia fergusonii (strain ATCC 35469 / DSM 13698 / CCUG 18766 / IAM 14443 / JCM 21226 / LMG 7866 / NBRC 102419 / NCTC 12128 / CDC 0568-73), this protein is Nitric oxide reductase FlRd-NAD(+) reductase.